The following is a 391-amino-acid chain: 8-amino-7-oxononanoate synthase 1 (391 aa).

Position 108-109 (108-109 (GF)) interacts with pyridoxal 5'-phosphate. Position 133 (H133) interacts with substrate. Pyridoxal 5'-phosphate contacts are provided by residues S180, 205-208 (DDAH), and 236-239 (TLSK). K239 is modified (N6-(pyridoxal phosphate)lysine). T353 contributes to the substrate binding site.

Belongs to the class-II pyridoxal-phosphate-dependent aminotransferase family. BioF subfamily. As to quaternary structure, homodimer. Pyridoxal 5'-phosphate is required as a cofactor.

The enzyme catalyses 6-carboxyhexanoyl-[ACP] + L-alanine + H(+) = (8S)-8-amino-7-oxononanoate + holo-[ACP] + CO2. Its pathway is cofactor biosynthesis; biotin biosynthesis. Catalyzes the decarboxylative condensation of pimeloyl-[acyl-carrier protein] and L-alanine to produce 8-amino-7-oxononanoate (AON), [acyl-carrier protein], and carbon dioxide. This is 8-amino-7-oxononanoate synthase 1 from Bacillus velezensis (strain DSM 23117 / BGSC 10A6 / LMG 26770 / FZB42) (Bacillus amyloliquefaciens subsp. plantarum).